The following is a 371-amino-acid chain: RNA polymerase sigma factor SigA (371 aa).

The interval 137–207 is sigma-70 factor domain-2; that stretch reads LAEANLRLVV…TRAIADQART (71 aa). Residues 161–164 carry the Interaction with polymerase core subunit RpoC motif; the sequence is DLIQ. Residues 216 to 292 form a sigma-70 factor domain-3 region; it reads ETINKLVREQ…DEVIENPVDY (77 aa). A sigma-70 factor domain-4 region spans residues 305–358; sequence VLDTLTDREENVLRLRFGLDDGKMRTLEDVGKVFDVTRERIRQIEAKALRKLRH. Residues 331 to 350 constitute a DNA-binding region (H-T-H motif); that stretch reads LEDVGKVFDVTRERIRQIEA.

This sequence belongs to the sigma-70 factor family. RpoD/SigA subfamily. In terms of assembly, interacts transiently with the RNA polymerase catalytic core.

It localises to the cytoplasm. In terms of biological role, sigma factors are initiation factors that promote the attachment of RNA polymerase to specific initiation sites and are then released. This sigma factor is the primary sigma factor during exponential growth. The sequence is that of RNA polymerase sigma factor SigA from Streptococcus mutans serotype c (strain ATCC 700610 / UA159).